The primary structure comprises 64 residues: Cytochrome b-c1 complex subunit 9 (64 aa).

Residues 2 to 21 (VAPTLTARLYSLLFRRTSTF) are Mitochondrial matrix-facing. The chain crosses the membrane as a helical span at residues 22–47 (ALTIVVGALFFERAFDQGADAIYEHI). Topologically, residues 48-64 (NEGKLWKHIKHKYENKE) are mitochondrial intermembrane.

It belongs to the UQCR10/QCR9 family. As to quaternary structure, component of the ubiquinol-cytochrome c oxidoreductase (cytochrome b-c1 complex, complex III, CIII), a multisubunit enzyme composed of 11 subunits. The complex is composed of 3 respiratory subunits cytochrome b, cytochrome c1 and Rieske protein UQCRFS1, 2 core protein subunits UQCRC1/QCR1 and UQCRC2/QCR2, and 6 low-molecular weight protein subunits UQCRH/QCR6, UQCRB/QCR7, UQCRQ/QCR8, UQCR10/QCR9, UQCR11/QCR10 and subunit 9, the cleavage product of Rieske protein UQCRFS1. The complex exists as an obligatory dimer and forms supercomplexes (SCs) in the inner mitochondrial membrane with NADH-ubiquinone oxidoreductase (complex I, CI) and cytochrome c oxidase (complex IV, CIV), resulting in different assemblies (supercomplex SCI(1)III(2)IV(1) and megacomplex MCI(2)III(2)IV(2)). Interacts with STMP1.

Its subcellular location is the mitochondrion inner membrane. Component of the ubiquinol-cytochrome c oxidoreductase, a multisubunit transmembrane complex that is part of the mitochondrial electron transport chain which drives oxidative phosphorylation. The respiratory chain contains 3 multisubunit complexes succinate dehydrogenase (complex II, CII), ubiquinol-cytochrome c oxidoreductase (cytochrome b-c1 complex, complex III, CIII) and cytochrome c oxidase (complex IV, CIV), that cooperate to transfer electrons derived from NADH and succinate to molecular oxygen, creating an electrochemical gradient over the inner membrane that drives transmembrane transport and the ATP synthase. The cytochrome b-c1 complex catalyzes electron transfer from ubiquinol to cytochrome c, linking this redox reaction to translocation of protons across the mitochondrial inner membrane, with protons being carried across the membrane as hydrogens on the quinol. In the process called Q cycle, 2 protons are consumed from the matrix, 4 protons are released into the intermembrane space and 2 electrons are passed to cytochrome c. This chain is Cytochrome b-c1 complex subunit 9 (UQCR10), found in Bos taurus (Bovine).